Reading from the N-terminus, the 180-residue chain is MPSKEFDTLPNIYLVGPMGAGKTTVGRHLAELLGREFLDSDHEIERRTGATIPWIFEKEGEIGFRSRETIVLDDLTSRRDLVLATGGGVVTQPANRSYLKTRGVVVYLYTPVELQLQRTYRDKNRPLLQVENPEQRLRDLLKLRDPLYRDVAHHIIETNQGAARELAQQILRVILSSGSH.

Residue G19–T24 coordinates ATP. T23 is a Mg(2+) binding site. Substrate-binding residues include D41, R65, and G87. ATP is bound at residue R125. R144 lines the substrate pocket.

The protein belongs to the shikimate kinase family. As to quaternary structure, monomer. Mg(2+) is required as a cofactor.

It localises to the cytoplasm. It catalyses the reaction shikimate + ATP = 3-phosphoshikimate + ADP + H(+). Its pathway is metabolic intermediate biosynthesis; chorismate biosynthesis; chorismate from D-erythrose 4-phosphate and phosphoenolpyruvate: step 5/7. Functionally, catalyzes the specific phosphorylation of the 3-hydroxyl group of shikimic acid using ATP as a cosubstrate. This is Shikimate kinase from Acinetobacter baylyi (strain ATCC 33305 / BD413 / ADP1).